Here is a 172-residue protein sequence, read N- to C-terminus: uncharacterized protein (172 aa).

This is an uncharacterized protein from Aquifex aeolicus (strain VF5).